Here is a 315-residue protein sequence, read N- to C-terminus: Neuroguidin (315 aa).

A2 is subject to N-acetylalanine. The stretch at 5 to 42 (EVLESDLPNAVALLKNLQEQVMAVTAQVQTLTKKVQAK) forms a coiled coil. A necessary for interaction with EIF4E region spans residues 41-174 (AKAYPTEKGL…KGTAKKYVPP (134 aa)). Residues S121, S142, and S143 each carry the phosphoserine modification. A disordered region spans residues 123 to 174 (SENDPLRFKPHPSNMMSKLSSEDEEEDEAEEGQSGASGKKSGKGTAKKYVPP). Residues 144–153 (EDEEEDEAEE) show a composition bias toward acidic residues. A coiled-coil region spans residues 181–205 (YDETEAEREKKRLERAKRRALSSSV). Residues S204 and S214 each carry the phosphoserine modification. The segment at 252 to 315 (SKREKGRRKR…RKKKGFRRRR (64 aa)) is disordered. Residues 264-276 (VMSSQLHSLTHFS) show a composition bias toward polar residues. Over residues 295-315 (TKKRKKIPKKGRKKKGFRRRR) the composition is skewed to basic residues.

The protein belongs to the SAS10 family. Part of the small subunit (SSU) processome, composed of more than 70 proteins and the RNA chaperone small nucleolar RNA (snoRNA) U3. Interacts with CPEB1 and EIF4E.

The protein localises to the nucleus. It localises to the nucleolus. The protein resides in the chromosome. Its subcellular location is the centromere. It is found in the cytoplasm. The protein localises to the cell projection. It localises to the axon. The protein resides in the dendrite. Its subcellular location is the filopodium. In terms of biological role, part of the small subunit (SSU) processome, first precursor of the small eukaryotic ribosomal subunit. During the assembly of the SSU processome in the nucleolus, many ribosome biogenesis factors, an RNA chaperone and ribosomal proteins associate with the nascent pre-rRNA and work in concert to generate RNA folding, modifications, rearrangements and cleavage as well as targeted degradation of pre-ribosomal RNA by the RNA exosome. Its dissociation from the complex determines the transition from state pre-A1 to state pre-A1*. Inhibits mRNA translation in a cytoplasmic polyadenylation element (CPE)-dependent manner. This chain is Neuroguidin (NGDN), found in Bos taurus (Bovine).